Here is a 714-residue protein sequence, read N- to C-terminus: Fimbrin-3 (714 aa).

The EF-hand domain occupies 7-55 (VIVSDPWLQSQLTQVELRSLNSKFVALKNQSGKVTLEDLPSVLVKVKSL). Calponin-homology (CH) domains follow at residues 124–241 (QSEK…KIQL), 269–372 (LPPE…HERN), 393–499 (CRDE…RTHM), and 514–622 (DMTD…YWSL). Actin-binding regions lie at residues 124-372 (QSEK…HERN) and 393-622 (CRDE…YWSL). Over residues 628–662 (SSESSSSSSDSSSTHSTTTTCTSTCTSTDASPAPS) the composition is skewed to low complexity. The disordered stretch occupies residues 628-694 (SSESSSSSSD…NEVSSLTIEE (67 aa)). Polar residues predominate over residues 670–680 (SSLNGEVSSLT). Positions 681-694 (IEEDNEVSSLTIEE) are enriched in acidic residues.

As to quaternary structure, interacts with F-actin.

Its subcellular location is the cytoplasm. It localises to the cytoskeleton. Cross-links actin filaments (F-actin). Stabilizes and prevents F-actin depolymerization mediated by profilin. May regulate actin cytoarchitecture, cell cycle, cell division, cell elongation and cytoplasmic tractus. The protein is Fimbrin-3 of Arabidopsis thaliana (Mouse-ear cress).